Reading from the N-terminus, the 228-residue chain is Phosphoribosylformylglycinamidine synthase subunit PurQ (228 aa).

In terms of domain architecture, Glutamine amidotransferase type-1 spans 3-226 (FAVVVFPGSN…VTYWRDAHVV (224 aa)). Catalysis depends on Cys86, which acts as the Nucleophile. Active-site residues include His195 and Glu197.

As to quaternary structure, part of the FGAM synthase complex composed of 1 PurL, 1 PurQ and 2 PurS subunits.

The protein localises to the cytoplasm. It catalyses the reaction N(2)-formyl-N(1)-(5-phospho-beta-D-ribosyl)glycinamide + L-glutamine + ATP + H2O = 2-formamido-N(1)-(5-O-phospho-beta-D-ribosyl)acetamidine + L-glutamate + ADP + phosphate + H(+). It carries out the reaction L-glutamine + H2O = L-glutamate + NH4(+). It participates in purine metabolism; IMP biosynthesis via de novo pathway; 5-amino-1-(5-phospho-D-ribosyl)imidazole from N(2)-formyl-N(1)-(5-phospho-D-ribosyl)glycinamide: step 1/2. Functionally, part of the phosphoribosylformylglycinamidine synthase complex involved in the purines biosynthetic pathway. Catalyzes the ATP-dependent conversion of formylglycinamide ribonucleotide (FGAR) and glutamine to yield formylglycinamidine ribonucleotide (FGAM) and glutamate. The FGAM synthase complex is composed of three subunits. PurQ produces an ammonia molecule by converting glutamine to glutamate. PurL transfers the ammonia molecule to FGAR to form FGAM in an ATP-dependent manner. PurS interacts with PurQ and PurL and is thought to assist in the transfer of the ammonia molecule from PurQ to PurL. This is Phosphoribosylformylglycinamidine synthase subunit PurQ from Anoxybacillus flavithermus (strain DSM 21510 / WK1).